The chain runs to 132 residues: Ribosome-binding factor A (132 aa).

Belongs to the RbfA family. Monomer. Binds 30S ribosomal subunits, but not 50S ribosomal subunits or 70S ribosomes.

The protein resides in the cytoplasm. Its function is as follows. One of several proteins that assist in the late maturation steps of the functional core of the 30S ribosomal subunit. Associates with free 30S ribosomal subunits (but not with 30S subunits that are part of 70S ribosomes or polysomes). Required for efficient processing of 16S rRNA. May interact with the 5'-terminal helix region of 16S rRNA. This is Ribosome-binding factor A from Pseudomonas entomophila (strain L48).